We begin with the raw amino-acid sequence, 94 residues long: DNA-binding protein HU (94 aa).

This sequence belongs to the bacterial histone-like protein family. As to quaternary structure, homodimer.

Its function is as follows. Histone-like DNA-binding protein which is capable of wrapping DNA to stabilize it, and thus to prevent its denaturation under extreme environmental conditions. It is essential for heterocyst differentiation. The polypeptide is DNA-binding protein HU (hup) (Nostoc sp. (strain PCC 7120 / SAG 25.82 / UTEX 2576)).